The sequence spans 109 residues: Iron-sulfur cluster assembly protein CyaY (109 aa).

It belongs to the frataxin family.

In terms of biological role, involved in iron-sulfur (Fe-S) cluster assembly. May act as a regulator of Fe-S biogenesis. The polypeptide is Iron-sulfur cluster assembly protein CyaY (Bordetella petrii (strain ATCC BAA-461 / DSM 12804 / CCUG 43448)).